The chain runs to 133 residues: MAQMMTLSLLSLVLALCIPWTQGSDGGGQDCCLKYSQKKIPYSIVRGYRKQEPSLGCPIPAILFLPRKHSKPELCANPEEGWVQNLMRRLDQPPAPGKQSPGCRKNRGTSKSGKKGKGSKGCKRTEQTQPSRG.

The N-terminal stretch at 1–23 is a signal peptide; sequence MAQMMTLSLLSLVLALCIPWTQG. Intrachain disulfides connect cysteine 31-cysteine 57, cysteine 32-cysteine 75, and cysteine 103-cysteine 122. The tract at residues 87–133 is disordered; the sequence is MRRLDQPPAPGKQSPGCRKNRGTSKSGKKGKGSKGCKRTEQTQPSRG. Positions 98-133 are C-terminal basic extension; sequence KQSPGCRKNRGTSKSGKKGKGSKGCKRTEQTQPSRG. Over residues 104–122 the composition is skewed to basic residues; sequence RKNRGTSKSGKKGKGSKGC.

The protein belongs to the intercrine beta (chemokine CC) family. In terms of assembly, binds to CCR7 and to CXCR3. Interacts with PDPN; relocalizes PDPN to the basolateral membrane. Interacts with GPR174. As to expression, expressed strongly in lung, spleen, thymus, peripheral and mesentric lymph nodes. Also expressed in the testis, kidney, liver, and heart.

It localises to the secreted. Its function is as follows. Inhibits hemopoiesis and stimulates chemotaxis. Chemotactic in vitro for thymocytes and activated T-cells, but not for B-cells, macrophages, or neutrophils. Potent mesangial cell chemoattractant. Shows preferential activity towards naive T-cells. May play a role in mediating homing of lymphocytes to secondary lymphoid organs. The sequence is that of C-C motif chemokine 21b (Ccl21b) from Mus musculus (Mouse).